A 214-amino-acid chain; its full sequence is uncharacterized protein (214 aa).

7 helical membrane passes run 4-23 (VSIVEIFLIISLPLLFFSSF), 35-57 (SFVHGAVLAVPLLLLRSFFLGYY), 67-89 (QWMRFFLFDYVFPLFCLPFFLFT), 96-118 (VSLVSGVSALFGAYTSFFFVHVY), 128-150 (ARVMTLVLYMTNLLQLHAHVSFS), 155-177 (LPLLGLIAALCIFLLMGAFSATV), and 187-209 (TVVYTSMLAGAGGVALLTHFFAV).

Its subcellular location is the cell membrane. This is an uncharacterized protein from Treponema pallidum (strain Nichols).